The sequence spans 96 residues: Alpha-elapitoxin-Al2b (96 aa).

The first 21 residues, 1–21, serve as a signal peptide directing secretion; it reads MKTLLLTLVVVTIVCLDFGGG. Disulfide bonds link cysteine 24-cysteine 41, cysteine 34-cysteine 62, cysteine 47-cysteine 51, cysteine 66-cysteine 77, and cysteine 78-cysteine 83.

The protein belongs to the three-finger toxin family. Long-chain subfamily. Type II alpha-neurotoxin sub-subfamily. Expressed by the venom gland.

Its subcellular location is the secreted. Functionally, potent long-chain postsynaptic neurotoxin. Pseudo-irreversibly inhibits the nicotinic acetylcholine receptor through competitive antagonism. This chain is Alpha-elapitoxin-Al2b, found in Austrelaps labialis (Pygmy copperhead).